Reading from the N-terminus, the 301-residue chain is 4-diphosphocytidyl-2-C-methyl-D-erythritol kinase (301 aa).

Residue K18 is part of the active site. P103–A113 contributes to the ATP binding site. The active site involves D145.

It belongs to the GHMP kinase family. IspE subfamily.

It carries out the reaction 4-CDP-2-C-methyl-D-erythritol + ATP = 4-CDP-2-C-methyl-D-erythritol 2-phosphate + ADP + H(+). Its pathway is isoprenoid biosynthesis; isopentenyl diphosphate biosynthesis via DXP pathway; isopentenyl diphosphate from 1-deoxy-D-xylulose 5-phosphate: step 3/6. Catalyzes the phosphorylation of the position 2 hydroxy group of 4-diphosphocytidyl-2C-methyl-D-erythritol. The polypeptide is 4-diphosphocytidyl-2-C-methyl-D-erythritol kinase (Bradyrhizobium sp. (strain BTAi1 / ATCC BAA-1182)).